The chain runs to 332 residues: tRNA N6-adenosine threonylcarbamoyltransferase (332 aa).

Fe cation is bound by residues His-107 and His-111. Substrate-binding positions include 129-133, Asp-162, Gly-175, and Asn-267; that span reads LVSGG. Residue Asp-295 participates in Fe cation binding.

This sequence belongs to the KAE1 / TsaD family. The cofactor is Fe(2+).

Its subcellular location is the cytoplasm. It carries out the reaction L-threonylcarbamoyladenylate + adenosine(37) in tRNA = N(6)-L-threonylcarbamoyladenosine(37) in tRNA + AMP + H(+). Functionally, required for the formation of a threonylcarbamoyl group on adenosine at position 37 (t(6)A37) in tRNAs that read codons beginning with adenine. Is involved in the transfer of the threonylcarbamoyl moiety of threonylcarbamoyl-AMP (TC-AMP) to the N6 group of A37, together with TsaE and TsaB. TsaD likely plays a direct catalytic role in this reaction. In Campylobacter hominis (strain ATCC BAA-381 / DSM 21671 / CCUG 45161 / LMG 19568 / NCTC 13146 / CH001A), this protein is tRNA N6-adenosine threonylcarbamoyltransferase.